The primary structure comprises 242 residues: Probable transcriptional regulatory protein NGK_1508 (242 aa).

This sequence belongs to the TACO1 family.

It localises to the cytoplasm. This Neisseria gonorrhoeae (strain NCCP11945) protein is Probable transcriptional regulatory protein NGK_1508.